The chain runs to 217 residues: Probable transaldolase (217 aa).

Lys83 (schiff-base intermediate with substrate) is an active-site residue.

The protein belongs to the transaldolase family. Type 3B subfamily.

It is found in the cytoplasm. It carries out the reaction D-sedoheptulose 7-phosphate + D-glyceraldehyde 3-phosphate = D-erythrose 4-phosphate + beta-D-fructose 6-phosphate. It functions in the pathway carbohydrate degradation; pentose phosphate pathway; D-glyceraldehyde 3-phosphate and beta-D-fructose 6-phosphate from D-ribose 5-phosphate and D-xylulose 5-phosphate (non-oxidative stage): step 2/3. In terms of biological role, transaldolase is important for the balance of metabolites in the pentose-phosphate pathway. This is Probable transaldolase from Lactiplantibacillus plantarum (strain ATCC BAA-793 / NCIMB 8826 / WCFS1) (Lactobacillus plantarum).